The chain runs to 473 residues: Cysteine--tRNA ligase (473 aa).

Cys29 contacts Zn(2+). A 'HIGH' region motif is present at residues 31 to 41; the sequence is PTVYDRAHLGN. Cys225, His250, and Glu254 together coordinate Zn(2+). The short motif at 281–285 is the 'KMSKS' region element; sequence KMSKS. Position 284 (Lys284) interacts with ATP.

This sequence belongs to the class-I aminoacyl-tRNA synthetase family. Monomer. Requires Zn(2+) as cofactor.

Its subcellular location is the cytoplasm. It carries out the reaction tRNA(Cys) + L-cysteine + ATP = L-cysteinyl-tRNA(Cys) + AMP + diphosphate. The sequence is that of Cysteine--tRNA ligase from Roseobacter denitrificans (strain ATCC 33942 / OCh 114) (Erythrobacter sp. (strain OCh 114)).